Here is a 341-residue protein sequence, read N- to C-terminus: Protein MENT (341 aa).

Positions 1–23 (MVPAAGALLWVLLLNLGPRAAGA) are cleaved as a signal peptide. Residues 115 to 196 (AGKDSTSREL…SPSPTAMPSP (82 aa)) are disordered. A compositionally biased stretch (polar residues) spans 127-155 (ATPNTAGSSSTRFIANSQEPEIRLTSSLP).

Post-translationally, phosphorylation sites are present in the extracellular medium. Plasma. Overexpressed in lymphomas.

Its subcellular location is the secreted. Involved in control of cellular proliferation. Onconcogenic modifier contributing to the tumor suppressor function of DNMT3B. The protein is Protein MENT (MENT) of Homo sapiens (Human).